The following is a 578-amino-acid chain: Proline--tRNA ligase (578 aa).

The protein belongs to the class-II aminoacyl-tRNA synthetase family. ProS type 1 subfamily. Homodimer.

The protein resides in the cytoplasm. The catalysed reaction is tRNA(Pro) + L-proline + ATP = L-prolyl-tRNA(Pro) + AMP + diphosphate. In terms of biological role, catalyzes the attachment of proline to tRNA(Pro) in a two-step reaction: proline is first activated by ATP to form Pro-AMP and then transferred to the acceptor end of tRNA(Pro). As ProRS can inadvertently accommodate and process non-cognate amino acids such as alanine and cysteine, to avoid such errors it has two additional distinct editing activities against alanine. One activity is designated as 'pretransfer' editing and involves the tRNA(Pro)-independent hydrolysis of activated Ala-AMP. The other activity is designated 'posttransfer' editing and involves deacylation of mischarged Ala-tRNA(Pro). The misacylated Cys-tRNA(Pro) is not edited by ProRS. The polypeptide is Proline--tRNA ligase (Burkholderia cenocepacia (strain HI2424)).